The chain runs to 178 residues: Riboflavin kinase (178 aa).

Mg(2+)-binding residues include threonine 39 and asparagine 41. The active-site Nucleophile is glutamate 116.

Belongs to the flavokinase family. It depends on Zn(2+) as a cofactor. Mg(2+) serves as cofactor.

The enzyme catalyses riboflavin + ATP = FMN + ADP + H(+). It participates in cofactor biosynthesis; FMN biosynthesis; FMN from riboflavin (ATP route): step 1/1. Functionally, catalyzes the phosphorylation of riboflavin (vitamin B2) to form flavin mononucleotide (FMN) coenzyme. In Scheffersomyces stipitis (strain ATCC 58785 / CBS 6054 / NBRC 10063 / NRRL Y-11545) (Yeast), this protein is Riboflavin kinase (FMN1).